A 421-amino-acid chain; its full sequence is C4-dicarboxylate transport protein (421 aa).

A run of 8 helical transmembrane segments spans residues 9-29 (VQVI…PDVG), 39-59 (FINA…VLGI), 76-96 (FIYF…VVNI), 145-165 (GDIL…AALG), 185-205 (IIGY…AYTI), 219-239 (LMMS…NIIC), 316-336 (VFGV…LMLT), and 348-368 (FIVL…GLAL).

This sequence belongs to the dicarboxylate/amino acid:cation symporter (DAACS) (TC 2.A.23) family.

Its subcellular location is the cell membrane. Its function is as follows. Responsible for the transport of succinate and fumarate, but not malate, across the membrane. In Bacillus subtilis (strain 168), this protein is C4-dicarboxylate transport protein (dctA).